Here is a 64-residue protein sequence, read N- to C-terminus: Long neurotoxin MS5 (64 aa).

Cystine bridges form between Cys-3-Cys-24, Cys-6-Cys-11, Cys-17-Cys-41, Cys-45-Cys-57, and Cys-58-Cys-63.

It belongs to the three-finger toxin family. Ancestral subfamily. Expressed by the venom gland.

Its subcellular location is the secreted. Its function is as follows. Produces peripheral paralysis by blocking neuromuscular transmission at the postsynaptic site. Very weak inhibitor of the endogenous nicotinic acetylcholine receptors (nAChR) in the human rhabdomyosarcoma TE 671 cell line. This neurotoxin is lethal to zebrafish by injection at the back of the dorsolateral region, but is not toxic to mice by intraperitoneal injection. The protein is Long neurotoxin MS5 of Micrurus surinamensis (Surinam coral snake).